A 115-amino-acid polypeptide reads, in one-letter code: uncharacterized protein (115 aa).

Residues 1–74 (MGTGLRSQSL…VPGSLGDTEQ (74 aa)) are disordered.

This is an uncharacterized protein from Homo sapiens (Human).